The following is a 562-amino-acid chain: Dihydroxy-acid dehydratase (562 aa).

Asp-80 is a Mg(2+) binding site. [2Fe-2S] cluster is bound at residue Cys-121. 2 residues coordinate Mg(2+): Asp-122 and Lys-123. Lys-123 is modified (N6-carboxylysine). Cys-194 contacts [2Fe-2S] cluster. A Mg(2+)-binding site is contributed by Glu-446. Ser-472 acts as the Proton acceptor in catalysis.

It belongs to the IlvD/Edd family. In terms of assembly, homodimer. [2Fe-2S] cluster serves as cofactor. The cofactor is Mg(2+).

The catalysed reaction is (2R)-2,3-dihydroxy-3-methylbutanoate = 3-methyl-2-oxobutanoate + H2O. It carries out the reaction (2R,3R)-2,3-dihydroxy-3-methylpentanoate = (S)-3-methyl-2-oxopentanoate + H2O. Its pathway is amino-acid biosynthesis; L-isoleucine biosynthesis; L-isoleucine from 2-oxobutanoate: step 3/4. It participates in amino-acid biosynthesis; L-valine biosynthesis; L-valine from pyruvate: step 3/4. In terms of biological role, functions in the biosynthesis of branched-chain amino acids. Catalyzes the dehydration of (2R,3R)-2,3-dihydroxy-3-methylpentanoate (2,3-dihydroxy-3-methylvalerate) into 2-oxo-3-methylpentanoate (2-oxo-3-methylvalerate) and of (2R)-2,3-dihydroxy-3-methylbutanoate (2,3-dihydroxyisovalerate) into 2-oxo-3-methylbutanoate (2-oxoisovalerate), the penultimate precursor to L-isoleucine and L-valine, respectively. This is Dihydroxy-acid dehydratase from Staphylococcus epidermidis (strain ATCC 35984 / DSM 28319 / BCRC 17069 / CCUG 31568 / BM 3577 / RP62A).